The sequence spans 334 residues: Tryptophan--tRNA ligase (334 aa).

ATP contacts are provided by residues 11–13 (QPS) and 19–20 (GN). Positions 12 to 20 (PSGELTIGN) match the 'HIGH' region motif. Residue aspartate 135 participates in L-tryptophan binding. ATP is bound by residues 147–149 (GED), valine 186, and 195–199 (KMSKS). The 'KMSKS' region signature appears at 195 to 199 (KMSKS).

This sequence belongs to the class-I aminoacyl-tRNA synthetase family. In terms of assembly, homodimer.

The protein resides in the cytoplasm. The enzyme catalyses tRNA(Trp) + L-tryptophan + ATP = L-tryptophyl-tRNA(Trp) + AMP + diphosphate + H(+). Functionally, catalyzes the attachment of tryptophan to tRNA(Trp). This Escherichia coli O157:H7 protein is Tryptophan--tRNA ligase.